The primary structure comprises 1391 residues: DNA-directed RNA polymerase subunit beta' (1391 aa).

Zn(2+) contacts are provided by cysteine 72, cysteine 74, cysteine 87, and cysteine 90. Mg(2+) contacts are provided by aspartate 462, aspartate 464, and aspartate 466. The Zn(2+) site is built by cysteine 816, cysteine 890, cysteine 897, and cysteine 900.

Belongs to the RNA polymerase beta' chain family. As to quaternary structure, the RNAP catalytic core consists of 2 alpha, 1 beta, 1 beta' and 1 omega subunit. When a sigma factor is associated with the core the holoenzyme is formed, which can initiate transcription. Mg(2+) is required as a cofactor. It depends on Zn(2+) as a cofactor.

The catalysed reaction is RNA(n) + a ribonucleoside 5'-triphosphate = RNA(n+1) + diphosphate. DNA-dependent RNA polymerase catalyzes the transcription of DNA into RNA using the four ribonucleoside triphosphates as substrates. The sequence is that of DNA-directed RNA polymerase subunit beta' from Neisseria meningitidis serogroup B (strain ATCC BAA-335 / MC58).